We begin with the raw amino-acid sequence, 60 residues long: Large ribosomal subunit protein uL30 (60 aa).

Belongs to the universal ribosomal protein uL30 family. Part of the 50S ribosomal subunit.

This chain is Large ribosomal subunit protein uL30, found in Bacillus pumilus (strain SAFR-032).